The chain runs to 312 residues: Malate dehydrogenase (312 aa).

NAD(+) contacts are provided by residues 12–17 and Asp36; that span reads GAGFTG. Residues Arg87 and Arg93 each contribute to the substrate site. NAD(+) is bound by residues Asn100 and 123–125; that span reads LTN. Asn125 contributes to the substrate binding site. At Ser149 the chain carries Phosphoserine. Arg156 serves as a coordination point for substrate. Residue His180 is the Proton acceptor of the active site.

The protein belongs to the LDH/MDH superfamily. MDH type 3 family. As to quaternary structure, homotetramer.

It carries out the reaction (S)-malate + NAD(+) = oxaloacetate + NADH + H(+). In terms of biological role, catalyzes the reversible oxidation of malate to oxaloacetate. The polypeptide is Malate dehydrogenase (Bacillus israeli).